The primary structure comprises 648 residues: Magnetosome protein MamZ (648 aa).

The segment at 1–431 (MLEAWMPKSG…YAAWLLANGI (431 aa)) is major facilitator domain. 18 helical membrane-spanning segments follow: residues 28–49 (IIYLLMTVGSLVAALSISIQPL), 69–87 (IQVVAEIVSIVCVGWFGLL), 94–113 (VRIIATGFLIAVAGAAMSLL), 119–143 (LAFGAAGLVLFYLTRVLLTVGADTV), 163–182 (LMGNLVFMMVFGGTMLSAII), 188–207 (YKGGVFIIMCLPLLIGIAGF), 252–273 (FYTRADVIILSLFFSLWCISVS), 285–305 (AHAAVMIGLLGLAVLAAIPLW), 317–335 (AIGASLSLAAVGYIWLGMF), 341–361 (WLVALPLLMVGIGHAGCFVTL), 373–395 (ILGAMVGAGYLVGGLGTVMLVQS), 407–428 (APFILMGTGKMLVTLYAAWLLA), 449–468 (PLVFLTAALPFVWLIGRSVI), 488–506 (YLGDWAFTFLIISLSMRPV), 518–538 (YRRMIGLFAFFYAVLHVLAYV), 558–574 (FILLGLAAFLLLIPLAF), 595–612 (ATYVINALVALHFILAAN), and 618–634 (PYVYAAAVIVLLWYRFY). A ferric reductase-like domain, required for correct magnetite crystal formation region spans residues 444–645 (KVDWKPLVFL…WRGGNVLRAL (202 aa)).

In the N-terminal section; belongs to the major facilitator superfamily. As to quaternary structure, probably interacts with FtsZ-like and MamY proteins.

The protein resides in the magnetosome membrane. Functionally, required for correct biomineralization of the magnetosome; probably converts and then transports some form of iron. It is partially functionally redundant with MamH. May function with MamX, MamY amd Mms6 in biomineralization. Despite its strong similarity to MsrQ (AC V6EX82) this protein does not genetically interact with bona fide MsrP (AC V6F0A4), which is encoded elsewhere in the genome. This Magnetospirillum gryphiswaldense (strain DSM 6361 / JCM 21280 / NBRC 15271 / MSR-1) protein is Magnetosome protein MamZ.